A 115-amino-acid chain; its full sequence is Large ribosomal subunit protein uL22 (115 aa).

Belongs to the universal ribosomal protein uL22 family. As to quaternary structure, part of the 50S ribosomal subunit.

This protein binds specifically to 23S rRNA; its binding is stimulated by other ribosomal proteins, e.g. L4, L17, and L20. It is important during the early stages of 50S assembly. It makes multiple contacts with different domains of the 23S rRNA in the assembled 50S subunit and ribosome. In terms of biological role, the globular domain of the protein is located near the polypeptide exit tunnel on the outside of the subunit, while an extended beta-hairpin is found that lines the wall of the exit tunnel in the center of the 70S ribosome. The chain is Large ribosomal subunit protein uL22 from Streptomyces avermitilis (strain ATCC 31267 / DSM 46492 / JCM 5070 / NBRC 14893 / NCIMB 12804 / NRRL 8165 / MA-4680).